Reading from the N-terminus, the 274-residue chain is THAP domain-containing protein 8 (274 aa).

The THAP-type zinc-finger motif lies at Met1–Phe85. Positions Ser83–Ala121 are disordered.

In Homo sapiens (Human), this protein is THAP domain-containing protein 8 (THAP8).